The primary structure comprises 420 residues: Trophoblast glycoprotein (420 aa).

The N-terminal stretch at 1–31 (MPGGCSRGPAAGDGRLRLARLALVLLGWVSS) is a signal peptide. Residues 32–355 (SSPTSSASSF…PILPPSLQTS (324 aa)) lie on the Extracellular side of the membrane. Residues 53 to 91 (SAQPPLPDQCPALCECSEAARTVKCVNRNLTEVPTDLPA) form the LRRNT domain. Intrachain disulfides connect C62–C68 and C66–C77. N-linked (GlcNAc...) asparagine glycosylation occurs at N81. LRR repeat units follow at residues 92–113 (YVRNLFLTGNQLAVLPAGAFAR), 116–139 (PLAELAALNLSGSRLDEVRAGAFE), 141–163 (LPSLRQLDLSHNPLADLSPFAFS), 172–204 (PSPLVELILNHIVPPEDERQNRSFEGMVVAALL), 209–232 (LQGLRRLELASNHFLYLPRDVLAQ), 233–255 (LPSLRHLDLSNNSLVSLTYVSFR), and 256–275 (NLTHLESLHLEDNALKVLHN). The N-linked (GlcNAc...) asparagine glycan is linked to N124. N275 is a glycosylation site (N-linked (GlcNAc...) asparagine). The 64-residue stretch at 283-346 (GLPHIRVFLD…LNSADLDCDP (64 aa)) folds into the LRRCT domain. Disulfide bonds link C298–C323 and C300–C344. A helical transmembrane segment spans residues 356 to 376 (YVFLGIVLALIGAIFLLVLYL). Over 377 to 420 (NRKGIKKWMHNIRDACRDHMEGYHYRYEINADPRLTNLSSNSDV) the chain is Cytoplasmic. At S418 the chain carries Phosphoserine.

Highly glycosylated. As to expression, expressed by all types of trophoblasts as early as 9 weeks of development. Specific for trophoblastic cells except for amniotic epithelium. In adult tissues, the expression is limited to a few epithelial cell types but is found on a variety of carcinoma.

It localises to the cell membrane. May function as an inhibitor of Wnt/beta-catenin signaling by indirectly interacting with LRP6 and blocking Wnt3a-dependent LRP6 internalization. This is Trophoblast glycoprotein (TPBG) from Homo sapiens (Human).